The sequence spans 194 residues: Interleukin-18 (194 aa).

The propeptide occupies 1–36; that stretch reads MAAMSEEGSCVNFKEMMFIDNTLYLIPEDNGDLESD.

Belongs to the IL-1 family. In terms of assembly, forms a ternary complex with ligand-binding receptor subunit IL18R1 and signaling receptor subunit IL18RAP at the plasma membrane. Mature IL18 first binds to IL18R1 forming a low affinity binary complex, which then interacts with IL18RAP to form a high affinity ternary complex that signals inside the cell. Interacts with cargo receptor TMED10; the interaction mediates the translocation from the cytoplasm into the ERGIC (endoplasmic reticulum-Golgi intermediate compartment) and thereby secretion. The pro-IL-18 precursor is processed by CASP1 to yield its mature, active form. The pro-IL-18 precursor is however not processed by Casp4/Casp11 in rodents. The pro-IL-18 precursor features autoinhibitory interactions between the propeptide and the post-cleavage-site region, preventing recognition by the IL18R1 receptor. Processing by CASP1 induces conformational changes to generate critical receptor-binding sites. The mature form is then secreted and released in the extracellular milieu by passing through the gasdermin-D (GSDMD) pore. In contrast, cleavage by CASP3 inactivates IL18.

It localises to the cytoplasm. It is found in the cytosol. The protein resides in the secreted. Pro-inflammatory cytokine primarily involved in epithelial barrier repair, polarized T-helper 1 (Th1) cell and natural killer (NK) cell immune responses. Upon binding to IL18R1 and IL18RAP, forms a signaling ternary complex which activates NF-kappa-B, triggering synthesis of inflammatory mediators. Synergizes with IL12/interleukin-12 to induce IFNG synthesis from T-helper 1 (Th1) cells and natural killer (NK) cells. Involved in transduction of inflammation downstream of pyroptosis: its mature form is specifically released in the extracellular milieu by passing through the gasdermin-D (GSDMD) pore. The protein is Interleukin-18 (Il18) of Rattus norvegicus (Rat).